Reading from the N-terminus, the 551-residue chain is Formate--tetrahydrofolate ligase (551 aa).

Residue 65–72 (TPAGEGKT) participates in ATP binding.

The protein belongs to the formate--tetrahydrofolate ligase family.

It catalyses the reaction (6S)-5,6,7,8-tetrahydrofolate + formate + ATP = (6R)-10-formyltetrahydrofolate + ADP + phosphate. It participates in one-carbon metabolism; tetrahydrofolate interconversion. The polypeptide is Formate--tetrahydrofolate ligase (Thermosipho africanus (strain TCF52B)).